We begin with the raw amino-acid sequence, 198 residues long: Synaptobrevin homolog YKT6 (198 aa).

The Longin domain maps to 8 to 131; sequence VFYKGEPKAV…ALDGHLSRYQ (124 aa). Positions 138–198 constitute a v-SNARE coiled-coil homology domain; that stretch reads PMSKVQAELD…RKQNSCCAIM (61 aa). S159 is subject to Phosphoserine. C194 carries S-palmitoyl cysteine lipidation. A Cysteine methyl ester modification is found at C195. C195 carries the S-farnesyl cysteine lipid modification. Residues 196–198 constitute a propeptide, removed in mature form; it reads AIM.

The protein belongs to the synaptobrevin family. Identified in 2 different SNARE complexes; the first one composed of GOSR1, GOSR2 and STX5 and the second one composed of BET1L, GOSR1 and STX5. Palmitoylated; catalyzes its own palmitoylation. Palmitoylation is required for Golgi targeting. In terms of processing, farnesylation is required for Golgi targeting. Post-translationally, (Microbial infection) Targeted and hydrolyzed by C.botulinum neurotoxin type X (BoNT/X) which hydrolyzes the 173-Lys-|-Ser-174 bond and probably inhibits neurotransmitter release. It remains unknown whether BoNT/X is ever produced, or what organisms it targets. In terms of tissue distribution, highly expressed by neurons in brain and faintly detected in spleen, lung and kidney (at protein level). Ubiquitously expressed.

The protein localises to the cytoplasm. It is found in the cytosol. It localises to the cytoplasmic vesicle membrane. Its subcellular location is the golgi apparatus membrane. Functionally, vesicular soluble NSF attachment protein receptor (v-SNARE) mediating vesicle docking and fusion to a specific acceptor cellular compartment. Functions in endoplasmic reticulum to Golgi transport; as part of a SNARE complex composed of GOSR1, GOSR2 and STX5. Functions in early/recycling endosome to TGN transport; as part of a SNARE complex composed of BET1L, GOSR1 and STX5. Has a S-palmitoyl transferase activity. The polypeptide is Synaptobrevin homolog YKT6 (Ykt6) (Rattus norvegicus (Rat)).